We begin with the raw amino-acid sequence, 311 residues long: HPr kinase/phosphorylase (311 aa).

Catalysis depends on residues H138 and K159. 153 to 160 (GKSGVGKS) provides a ligand contact to ATP. S160 serves as a coordination point for Mg(2+). The active-site Proton acceptor; for phosphorylation activity. Proton donor; for dephosphorylation activity is D177. The important for the catalytic mechanism of both phosphorylation and dephosphorylation stretch occupies residues 201–210 (LEIRGLGIIN). E202 is a Mg(2+) binding site. Residue R243 is part of the active site. The interval 264 to 269 (PVRPGR) is important for the catalytic mechanism of dephosphorylation.

Belongs to the HPrK/P family. Homohexamer. Mg(2+) serves as cofactor.

The enzyme catalyses [HPr protein]-L-serine + ATP = [HPr protein]-O-phospho-L-serine + ADP + H(+). It carries out the reaction [HPr protein]-O-phospho-L-serine + phosphate + H(+) = [HPr protein]-L-serine + diphosphate. In terms of biological role, catalyzes the ATP- as well as the pyrophosphate-dependent phosphorylation of a specific serine residue in HPr, a phosphocarrier protein of the phosphoenolpyruvate-dependent sugar phosphotransferase system (PTS). HprK/P also catalyzes the pyrophosphate-producing, inorganic phosphate-dependent dephosphorylation (phosphorolysis) of seryl-phosphorylated HPr (P-Ser-HPr). The two antagonistic activities of HprK/P are regulated by several intracellular metabolites, which change their concentration in response to the absence or presence of rapidly metabolisable carbon sources (glucose, fructose, etc.) in the growth medium. Also phosphorylates/dephosphorylates the HPr-like catabolite repression protein crh on a specific serine residue. Therefore, by controlling the phosphorylation state of HPr and crh, HPrK/P is a sensor enzyme that plays a major role in the regulation of carbon metabolism and sugar transport: it mediates carbon catabolite repression (CCR), and regulates PTS-catalyzed carbohydrate uptake and inducer exclusion. The chain is HPr kinase/phosphorylase from Geobacillus kaustophilus (strain HTA426).